Reading from the N-terminus, the 258-residue chain is C1q-related factor (258 aa).

A signal peptide spans 1 to 16 (MLLVLVVLIPVLVSSG). The interval 39–117 (GPGAGARTDG…PGLPGAGGSG (79 aa)) is disordered. Residues 67-77 (GPQGKPGRTGK) are compositionally biased toward low complexity. The 49-residue stretch at 67–115 (GPQGKPGRTGKPGPPGPPGDPGPPGPVGPPGEKGEPGKPGPPGLPGAGG) folds into the Collagen-like domain. Positions 78-95 (PGPPGPPGDPGPPGPVGP) are enriched in pro residues. In terms of domain architecture, C1q spans 125–258 (TTVPRVAFYA…TFSGFIIYSD (134 aa)).

Interacts with ADGRB3. Forms heterooligomers with C1QL4, when proteins are coexpressed; this interaction does not occur after secretion. In terms of tissue distribution, expressed in brainstem.

It localises to the secreted. Its function is as follows. May regulate the number of excitatory synapses that are formed on hippocampus neurons. Has no effect on inhibitory synapses. This Homo sapiens (Human) protein is C1q-related factor (C1QL1).